Consider the following 472-residue polypeptide: Uronate isomerase (472 aa).

Belongs to the metallo-dependent hydrolases superfamily. Uronate isomerase family.

It carries out the reaction D-glucuronate = D-fructuronate. The enzyme catalyses aldehydo-D-galacturonate = keto-D-tagaturonate. Its pathway is carbohydrate metabolism; pentose and glucuronate interconversion. This is Uronate isomerase from Shouchella clausii (strain KSM-K16) (Alkalihalobacillus clausii).